The primary structure comprises 227 residues: Probable septum site-determining protein MinC (227 aa).

The protein belongs to the MinC family. Interacts with MinD and FtsZ.

Cell division inhibitor that blocks the formation of polar Z ring septums. Rapidly oscillates between the poles of the cell to destabilize FtsZ filaments that have formed before they mature into polar Z rings. Prevents FtsZ polymerization. The protein is Probable septum site-determining protein MinC of Photorhabdus laumondii subsp. laumondii (strain DSM 15139 / CIP 105565 / TT01) (Photorhabdus luminescens subsp. laumondii).